The primary structure comprises 205 residues: Putative lipoprotein LppC (205 aa).

A signal peptide spans 1–27; it reads MESPMTSTLHRTPLATAGLALVVALGG. A lipid anchor (N-palmitoyl cysteine) is attached at Cys-28. Residue Cys-28 is the site of S-diacylglycerol cysteine attachment. Residues 126 to 145 form a disordered region; that stretch reads GSTADGQTPAGGHSVPNSGG.

Belongs to the UPF0098 family.

It is found in the cell membrane. In Mycobacterium tuberculosis (strain CDC 1551 / Oshkosh), this protein is Putative lipoprotein LppC (lppC).